The chain runs to 148 residues: uncharacterized protein (148 aa).

The interval 1-108 (MGRAGPRSTA…PSRLRGKRSL (108 aa)) is disordered. Positions 22–42 (RRPRPWQKPTSPRRLHRRRPR) are enriched in basic residues. Over residues 88–97 (DTSASNPSQR) the composition is skewed to polar residues.

This is an uncharacterized protein from Homo sapiens (Human).